A 734-amino-acid chain; its full sequence is MALRFPRFSQGLAQDPTTRRIWFGIATAHDFESHDDITEERLYQNIFASHFGQLAIIFLWTSGNLFHVAWQGNFEAWVQDPLHVRPIAHAIWDPHFGQPAVEAFTRGGALGPVNIAYSGVYQWWYTIGLRTNGDLYTGALFLLFLSAISLIAGWLHLQPKWKPSVSWFKNAESRLNHHLSGLFGVSSLAWTGHLVHVAIPASRGESVRWNNFLDVLPHPQGLGPLFTGQWNLYAQNPDSNNHLFGTSEGAGTAILTLLGGFHPQTQSLWLTDMAHHHLAIAFIFLVAGHMYRTNFGIGHSIKDLLEAHIPPGGRLGRGHKGLYDTINNSLHFQLGLALASLGVITSLVAQHMYALPAYAFIAQDFTTQAALYTHHQYIAGFIMTGAFAHGAIFFIRDYNPEQNEDNVLARMLDHKEAIISHLSWASLFLGFHTLGLYVHNDVMLAFGTPEKQILIEPIFAQWIQSAHGKTSYGFDVLLSSTSGPAFNAGRSIWLPGWLNAVNENSNSLFLTIGPGDFLVHHAIALGLHTTTLILVKGALDARGSKLMPDKKDFGYSFPCDGPGRGGTCDISAWDAFYLAVFWMLNTIGWVTFYWHWKHITLWQGNVSQFNESSTYLMGWLRDYLWLNSSQLINGYNPFGMNSLSVWAWMFLFGHLVWATGFMFLISWRGYWQELIETLAWAHERTPLANLIRWRDKPVALSIVQARLVGLAHFSVGYIFTYAAFLIASTSGKFG.

The next 8 membrane-spanning stretches (helical) occupy residues 46–69 (IFASHFGQLAIIFLWTSGNLFHVA), 135–158 (LYTGALFLLFLSAISLIAGWLHLQ), 175–199 (LNHHLSGLFGVSSLAWTGHLVHVAI), 273–291 (MAHHHLAIAFIFLVAGHMY), 330–353 (LHFQLGLALASLGVITSLVAQHMY), 369–395 (AALYTHHQYIAGFIMTGAFAHGAIFFI), 417–439 (AIISHLSWASLFLGFHTLGLYVH), and 517–535 (FLVHHAIALGLHTTTLILV). Residues Cys559 and Cys568 each contribute to the [4Fe-4S] cluster site. Helical transmembrane passes span 575–596 (AFYLAVFWMLNTIGWVTFYWHW) and 643–665 (LSVWAWMFLFGHLVWATGFMFLI). Residues His654, Met662, and Tyr670 each coordinate chlorophyll a. Trp671 lines the phylloquinone pocket. A helical transmembrane segment spans residues 707-727 (LVGLAHFSVGYIFTYAAFLIA).

The protein belongs to the PsaA/PsaB family. As to quaternary structure, the PsaA/B heterodimer binds the P700 chlorophyll special pair and subsequent electron acceptors. PSI consists of a core antenna complex that captures photons, and an electron transfer chain that converts photonic excitation into a charge separation. The eukaryotic PSI reaction center is composed of at least 11 subunits. It depends on P700 is a chlorophyll a/chlorophyll a' dimer, A0 is one or more chlorophyll a, A1 is one or both phylloquinones and FX is a shared 4Fe-4S iron-sulfur center. as a cofactor.

The protein resides in the plastid. It is found in the chloroplast thylakoid membrane. It catalyses the reaction reduced [plastocyanin] + hnu + oxidized [2Fe-2S]-[ferredoxin] = oxidized [plastocyanin] + reduced [2Fe-2S]-[ferredoxin]. In terms of biological role, psaA and PsaB bind P700, the primary electron donor of photosystem I (PSI), as well as the electron acceptors A0, A1 and FX. PSI is a plastocyanin-ferredoxin oxidoreductase, converting photonic excitation into a charge separation, which transfers an electron from the donor P700 chlorophyll pair to the spectroscopically characterized acceptors A0, A1, FX, FA and FB in turn. Oxidized P700 is reduced on the lumenal side of the thylakoid membrane by plastocyanin. This Cucumis sativus (Cucumber) protein is Photosystem I P700 chlorophyll a apoprotein A2.